Here is a 486-residue protein sequence, read N- to C-terminus: Malonate-semialdehyde dehydrogenase 1 (486 aa).

NAD(+)-binding residues include Phe154, Lys178, Glu181, Arg182, and Ser231. The Nucleophile role is filled by Cys286. Position 386 (Glu386) interacts with NAD(+).

This sequence belongs to the aldehyde dehydrogenase family. IolA subfamily. In terms of assembly, homotetramer.

It catalyses the reaction 3-oxopropanoate + NAD(+) + CoA + H2O = hydrogencarbonate + acetyl-CoA + NADH + H(+). It carries out the reaction 2-methyl-3-oxopropanoate + NAD(+) + CoA + H2O = propanoyl-CoA + hydrogencarbonate + NADH + H(+). Its pathway is polyol metabolism; myo-inositol degradation into acetyl-CoA; acetyl-CoA from myo-inositol: step 7/7. Its function is as follows. Catalyzes the oxidation of malonate semialdehyde (MSA) and methylmalonate semialdehyde (MMSA) into acetyl-CoA and propanoyl-CoA, respectively. Is involved in a myo-inositol catabolic pathway. Bicarbonate, and not CO2, is the end-product of the enzymatic reaction. The chain is Malonate-semialdehyde dehydrogenase 1 from Oceanobacillus iheyensis (strain DSM 14371 / CIP 107618 / JCM 11309 / KCTC 3954 / HTE831).